Reading from the N-terminus, the 452-residue chain is Phosphoglucosamine mutase (452 aa).

S108 serves as the catalytic Phosphoserine intermediate. 4 residues coordinate Mg(2+): S108, D247, D249, and D251. S108 is modified (phosphoserine).

This sequence belongs to the phosphohexose mutase family. The cofactor is Mg(2+). Post-translationally, activated by phosphorylation.

The enzyme catalyses alpha-D-glucosamine 1-phosphate = D-glucosamine 6-phosphate. In terms of biological role, catalyzes the conversion of glucosamine-6-phosphate to glucosamine-1-phosphate. The protein is Phosphoglucosamine mutase of Paraburkholderia phytofirmans (strain DSM 17436 / LMG 22146 / PsJN) (Burkholderia phytofirmans).